Reading from the N-terminus, the 284-residue chain is RNase adapter protein RapZ (284 aa).

8-15 (GRSGSGKS) provides a ligand contact to ATP. 56–59 (DVRN) is a binding site for GTP. Positions 266 to 284 (RSRGKNVQSRHRTLEKRKQ) are RNA-binding.

This sequence belongs to the RapZ-like family. RapZ subfamily. Homotrimer.

Functionally, modulates the synthesis of GlmS, by affecting the processing and stability of the regulatory small RNA GlmZ. When glucosamine-6-phosphate (GlcN6P) concentrations are high in the cell, RapZ binds GlmZ and targets it to cleavage by RNase E. Consequently, GlmZ is inactivated and unable to activate GlmS synthesis. Under low GlcN6P concentrations, RapZ is sequestered and inactivated by an other regulatory small RNA, GlmY, preventing GlmZ degradation and leading to synthesis of GlmS. The chain is RNase adapter protein RapZ from Serratia proteamaculans (strain 568).